Consider the following 123-residue polypeptide: Large ribosomal subunit protein bL12 (123 aa).

Belongs to the bacterial ribosomal protein bL12 family. As to quaternary structure, homodimer. Part of the ribosomal stalk of the 50S ribosomal subunit. Forms a multimeric L10(L12)X complex, where L10 forms an elongated spine to which 2 to 4 L12 dimers bind in a sequential fashion. Binds GTP-bound translation factors.

Functionally, forms part of the ribosomal stalk which helps the ribosome interact with GTP-bound translation factors. Is thus essential for accurate translation. The protein is Large ribosomal subunit protein bL12 of Laribacter hongkongensis (strain HLHK9).